Here is a 453-residue protein sequence, read N- to C-terminus: UDP-N-acetylmuramoylalanine--D-glutamate ligase (453 aa).

Residue Gly115–Thr121 coordinates ATP.

Belongs to the MurCDEF family.

It is found in the cytoplasm. It carries out the reaction UDP-N-acetyl-alpha-D-muramoyl-L-alanine + D-glutamate + ATP = UDP-N-acetyl-alpha-D-muramoyl-L-alanyl-D-glutamate + ADP + phosphate + H(+). The protein operates within cell wall biogenesis; peptidoglycan biosynthesis. Functionally, cell wall formation. Catalyzes the addition of glutamate to the nucleotide precursor UDP-N-acetylmuramoyl-L-alanine (UMA). This is UDP-N-acetylmuramoylalanine--D-glutamate ligase from Geotalea daltonii (strain DSM 22248 / JCM 15807 / FRC-32) (Geobacter daltonii).